A 472-amino-acid polypeptide reads, in one-letter code: Alkaline phosphatase (472 aa).

The first 21 residues, Met1 to Ala21, serve as a signal peptide directing secretion. Position 74 (Asp74) interacts with Mg(2+). Asp74 serves as a coordination point for Zn(2+). The Phosphoserine intermediate role is filled by Ser125. The Mg(2+) site is built by Asp176 and Thr178. Disulfide bonds link Cys191–Cys201 and Cys309–Cys359. Glu345 serves as a coordination point for Mg(2+). Zn(2+) contacts are provided by Asp350, His354, Asp392, His393, and His435.

Belongs to the alkaline phosphatase family. Homodimer. Mg(2+) serves as cofactor. It depends on Zn(2+) as a cofactor.

The protein resides in the periplasm. The enzyme catalyses a phosphate monoester + H2O = an alcohol + phosphate. The sequence is that of Alkaline phosphatase (phoA) from Escherichia fergusonii (strain ATCC 35469 / DSM 13698 / CCUG 18766 / IAM 14443 / JCM 21226 / LMG 7866 / NBRC 102419 / NCTC 12128 / CDC 0568-73).